The following is an 86-amino-acid chain: Putative regulatory protein Dvul_2085 (86 aa).

The protein belongs to the RemA family.

The polypeptide is Putative regulatory protein Dvul_2085 (Nitratidesulfovibrio vulgaris (strain DP4) (Desulfovibrio vulgaris)).